The chain runs to 92 residues: Small ribosomal subunit protein uS19 (92 aa).

The protein belongs to the universal ribosomal protein uS19 family.

Its function is as follows. Protein S19 forms a complex with S13 that binds strongly to the 16S ribosomal RNA. The sequence is that of Small ribosomal subunit protein uS19 from Rhizobium rhizogenes (strain K84 / ATCC BAA-868) (Agrobacterium radiobacter).